A 361-amino-acid chain; its full sequence is C3a anaphylatoxin chemotactic receptor (361 aa).

At 1–64 (MQQETQAPPL…FASSEVRVIS (64 aa)) the chain is on the extracellular side. N36 and N50 each carry an N-linked (GlcNAc...) asparagine glycan. A helical membrane pass occupies residues 65–85 (LVVYCLTFLLGVPGNSFVIFI). Residues 86–96 (AGMKMKRTVNT) are Cytoplasmic-facing. The chain crosses the membrane as a helical span at residues 97–117 (IWFLNLATADLLCCLSVPLTV). Topologically, residues 118 to 134 (AEILLDHHWPYGYAMCK) are extracellular. The cysteines at positions 133 and 210 are disulfide-linked. A helical transmembrane segment spans residues 135-155 (ILPSVIVISMFASVFTLNIIS). Residues 156–177 (LDRFTQVITPVWAQNHRSLLLA) are Cytoplasmic-facing. Residues 178-198 (RLSCVAVWILALLLSLPFMIL) traverse the membrane as a helical segment. The Extracellular segment spans residues 199–224 (RRTYEEFNMTVCTFDDDDFTTYGALS). The chain crosses the membrane as a helical span at residues 225–245 (IVRFVFGFLIPLMSIVTCYGI). The Cytoplasmic portion of the chain corresponds to 246-262 (IARKLGSRHFRSGRAFR). The chain crosses the membrane as a helical span at residues 263 to 283 (IMLAVIVAFFLCWMPYHVLDL). Topologically, residues 284–301 (IRSYGGESSSMVALKVDP) are extracellular. The helical transmembrane segment at 302–322 (LAISLAYVNSCLNPVLYVFMG) threads the bilayer. The Cytoplasmic portion of the chain corresponds to 323 to 361 (QDFKNKVQLSLRRVFERAFSEEGTQISRSTQSQQVHSVL).

Belongs to the G-protein coupled receptor 1 family.

The protein resides in the cell membrane. In terms of biological role, receptor for the chemotactic and inflammatory peptide anaphylatoxin C3a. This receptor stimulates chemotaxis, granule enzyme release and superoxide anion production. This is C3a anaphylatoxin chemotactic receptor (c3ar1) from Danio rerio (Zebrafish).